A 348-amino-acid chain; its full sequence is Phosphoribosylformylglycinamidine cyclo-ligase (348 aa).

This sequence belongs to the AIR synthase family.

The protein localises to the cytoplasm. The enzyme catalyses 2-formamido-N(1)-(5-O-phospho-beta-D-ribosyl)acetamidine + ATP = 5-amino-1-(5-phospho-beta-D-ribosyl)imidazole + ADP + phosphate + H(+). It participates in purine metabolism; IMP biosynthesis via de novo pathway; 5-amino-1-(5-phospho-D-ribosyl)imidazole from N(2)-formyl-N(1)-(5-phospho-D-ribosyl)glycinamide: step 2/2. This is Phosphoribosylformylglycinamidine cyclo-ligase from Roseobacter denitrificans (strain ATCC 33942 / OCh 114) (Erythrobacter sp. (strain OCh 114)).